Consider the following 250-residue polypeptide: Ribose-5-phosphate isomerase A (250 aa).

Substrate-binding positions include 33 to 36 (TGST), 89 to 92 (DGAD), and 102 to 105 (KGGG). Residue Glu-111 is the Proton acceptor of the active site. Lys-129 serves as a coordination point for substrate.

Belongs to the ribose 5-phosphate isomerase family. In terms of assembly, homodimer.

The enzyme catalyses aldehydo-D-ribose 5-phosphate = D-ribulose 5-phosphate. It participates in carbohydrate degradation; pentose phosphate pathway; D-ribose 5-phosphate from D-ribulose 5-phosphate (non-oxidative stage): step 1/1. Catalyzes the reversible conversion of ribose-5-phosphate to ribulose 5-phosphate. The protein is Ribose-5-phosphate isomerase A of Cereibacter sphaeroides (strain ATCC 17025 / ATH 2.4.3) (Rhodobacter sphaeroides).